The chain runs to 459 residues: UDP-N-acetylmuramoylalanine--D-glutamate ligase (459 aa).

An ATP-binding site is contributed by 120–126; it reads GSNGKTT.

Belongs to the MurCDEF family.

It is found in the cytoplasm. The enzyme catalyses UDP-N-acetyl-alpha-D-muramoyl-L-alanine + D-glutamate + ATP = UDP-N-acetyl-alpha-D-muramoyl-L-alanyl-D-glutamate + ADP + phosphate + H(+). Its pathway is cell wall biogenesis; peptidoglycan biosynthesis. Its function is as follows. Cell wall formation. Catalyzes the addition of glutamate to the nucleotide precursor UDP-N-acetylmuramoyl-L-alanine (UMA). This chain is UDP-N-acetylmuramoylalanine--D-glutamate ligase, found in Lactobacillus acidophilus (strain ATCC 700396 / NCK56 / N2 / NCFM).